The primary structure comprises 89 residues: Large ribosomal subunit protein bL27 (89 aa).

A disordered region spans residues 1–24; it reads MAHKKGTGSTRNGRDSRSQRLGVK.

This sequence belongs to the bacterial ribosomal protein bL27 family.

This chain is Large ribosomal subunit protein bL27, found in Microcystis aeruginosa (strain NIES-843 / IAM M-2473).